The chain runs to 199 residues: Recombination protein RecR (199 aa).

The C4-type zinc-finger motif lies at 57–72; that stretch reads CSVCGNITEQDPCAIC. In terms of domain architecture, Toprim spans 80–176; that stretch reads STIMVVEEAK…KVTRLAAGLA (97 aa).

The protein belongs to the RecR family.

Its function is as follows. May play a role in DNA repair. It seems to be involved in an RecBC-independent recombinational process of DNA repair. It may act with RecF and RecO. In Lactobacillus delbrueckii subsp. bulgaricus (strain ATCC BAA-365 / Lb-18), this protein is Recombination protein RecR.